We begin with the raw amino-acid sequence, 345 residues long: Phosphoribosylformylglycinamidine cyclo-ligase (345 aa).

The protein belongs to the AIR synthase family.

It is found in the cytoplasm. The enzyme catalyses 2-formamido-N(1)-(5-O-phospho-beta-D-ribosyl)acetamidine + ATP = 5-amino-1-(5-phospho-beta-D-ribosyl)imidazole + ADP + phosphate + H(+). Its pathway is purine metabolism; IMP biosynthesis via de novo pathway; 5-amino-1-(5-phospho-D-ribosyl)imidazole from N(2)-formyl-N(1)-(5-phospho-D-ribosyl)glycinamide: step 2/2. The chain is Phosphoribosylformylglycinamidine cyclo-ligase from Escherichia coli O45:K1 (strain S88 / ExPEC).